A 297-amino-acid chain; its full sequence is MTKSGSKSEKFLLIDGNYLVHRSYYVSFKFKNNFRSTIYLFFQTIIKIIKNLNPENIFIAFDEEGGTWRHDLCKEYKSQRSKMEDEFWNIFKAIREILDSINLNSGGFRGHEADDVIATITSKFKDENQIYIFSRDKDLLQLIDKNVYITHDNELKNLISIENFYQNFQLEPDQIVDFKAIAGDSSDNLKGIAGIGEKGAKNLLNNFKSLEKIFDSLESTNLISKAQKQKIRDGKEQALFLKKIVTLNKEVPMKLEKELFAIKININEEILEKLDKYDSRYVLKQFEKALESDDYLW.

Residues 171 to 262 (EPDQIVDFKA…MKLEKELFAI (92 aa)) enclose the 5'-3' exonuclease domain.

Functionally, 5'-3' exonuclease acting preferentially on double-stranded DNA. This Mycoplasmopsis pulmonis (strain UAB CTIP) (Mycoplasma pulmonis) protein is 5'-3' exonuclease (polA).